The sequence spans 713 residues: Polyribonucleotide nucleotidyltransferase (713 aa).

Mg(2+) contacts are provided by D491 and D497. Positions 558–617 (PRMITIKINPEKIRDVIGKGGSVIRALTEETGTTIDISDDGVVTIASTSSDGMAEAKKRI) constitute a KH domain. An S1 motif domain is found at 627–695 (GQVYEGTVLK…EKGRVRLSAK (69 aa)).

It belongs to the polyribonucleotide nucleotidyltransferase family. Requires Mg(2+) as cofactor.

It is found in the cytoplasm. The enzyme catalyses RNA(n+1) + phosphate = RNA(n) + a ribonucleoside 5'-diphosphate. Involved in mRNA degradation. Catalyzes the phosphorolysis of single-stranded polyribonucleotides processively in the 3'- to 5'-direction. The chain is Polyribonucleotide nucleotidyltransferase from Burkholderia cenocepacia (strain ATCC BAA-245 / DSM 16553 / LMG 16656 / NCTC 13227 / J2315 / CF5610) (Burkholderia cepacia (strain J2315)).